We begin with the raw amino-acid sequence, 417 residues long: NADH-quinone oxidoreductase subunit D (417 aa).

It belongs to the complex I 49 kDa subunit family. As to quaternary structure, NDH-1 is composed of 14 different subunits. Subunits NuoB, C, D, E, F, and G constitute the peripheral sector of the complex.

Its subcellular location is the cell inner membrane. It catalyses the reaction a quinone + NADH + 5 H(+)(in) = a quinol + NAD(+) + 4 H(+)(out). NDH-1 shuttles electrons from NADH, via FMN and iron-sulfur (Fe-S) centers, to quinones in the respiratory chain. The immediate electron acceptor for the enzyme in this species is believed to be ubiquinone. Couples the redox reaction to proton translocation (for every two electrons transferred, four hydrogen ions are translocated across the cytoplasmic membrane), and thus conserves the redox energy in a proton gradient. In Burkholderia vietnamiensis (strain G4 / LMG 22486) (Burkholderia cepacia (strain R1808)), this protein is NADH-quinone oxidoreductase subunit D.